We begin with the raw amino-acid sequence, 412 residues long: WW domain-containing oxidoreductase (412 aa).

Positions 1–24 are disordered; the sequence is MAALKYAGMEDTDSEDELPPGWEE. One can recognise a WW 1 domain in the interval 16–49; sequence DELPPGWEERSTKDGWVYYANHEEMKTQWEHPKT. The short motif at 50 to 55 is the Nuclear localization signal element; that stretch reads GKKKRC. A WW 2 domain is found at 57–90; sequence GALPYGWEQETDDKGQIFYVDHINKRKTYFDPRQ. 128-134 provides a ligand contact to NADP(+); sequence GANSGIG. Ser257 provides a ligand contact to substrate. Tyr290 functions as the Proton acceptor in the catalytic mechanism.

It belongs to the short-chain dehydrogenases/reductases (SDR) family.

The protein resides in the cytoplasm. It is found in the mitochondrion. It localises to the golgi apparatus. Its subcellular location is the lysosome. Its function is as follows. Putative oxidoreductase. Acts as a tumor suppressor and plays a role in apoptosis. May function synergistically with p53/TP53 to control genotoxic stress-induced cell death. Plays a role in TGFB1 signaling and TGFB1-mediated cell death. May also play a role in tumor necrosis factor (TNF)-mediated cell death. Required for normal bone development. Inhibits Wnt signaling. The polypeptide is WW domain-containing oxidoreductase (wwox) (Danio rerio (Zebrafish)).